Here is a 315-residue protein sequence, read N- to C-terminus: Putative steroid dehydrogenase 2 (315 aa).

Alanine 47–isoleucine 76 lines the NADP(+) pocket. Tyrosine 202 is a catalytic residue.

This sequence belongs to the short-chain dehydrogenases/reductases (SDR) family. 17-beta-HSD 3 subfamily.

The chain is Putative steroid dehydrogenase 2 (stdh-2) from Caenorhabditis elegans.